The sequence spans 142 residues: Translation initiation factor 2 subunit beta (142 aa).

This sequence belongs to the eIF-2-beta/eIF-5 family. Heterotrimer composed of an alpha, a beta and a gamma chain.

In terms of biological role, eIF-2 functions in the early steps of protein synthesis by forming a ternary complex with GTP and initiator tRNA. The sequence is that of Translation initiation factor 2 subunit beta from Thermococcus gammatolerans (strain DSM 15229 / JCM 11827 / EJ3).